A 374-amino-acid chain; its full sequence is PqqA peptide cyclase (374 aa).

Positions 4–224 (IEPPMGLLAE…ERLKGVMVID (221 aa)) constitute a Radical SAM core domain. Cysteine 18, cysteine 22, and cysteine 25 together coordinate [4Fe-4S] cluster.

Belongs to the radical SAM superfamily. PqqE family. In terms of assembly, interacts with PqqD. The interaction is necessary for activity of PqqE. Requires [4Fe-4S] cluster as cofactor.

The catalysed reaction is [PQQ precursor protein] + S-adenosyl-L-methionine = E-Y cross-linked-[PQQ precursor protein] + 5'-deoxyadenosine + L-methionine + H(+). It functions in the pathway cofactor biosynthesis; pyrroloquinoline quinone biosynthesis. Its function is as follows. Catalyzes the cross-linking of a glutamate residue and a tyrosine residue in the PqqA protein as part of the biosynthesis of pyrroloquinoline quinone (PQQ). The protein is PqqA peptide cyclase of Granulibacter bethesdensis (strain ATCC BAA-1260 / CGDNIH1).